Here is a 190-residue protein sequence, read N- to C-terminus: Peptidyl-tRNA hydrolase (190 aa).

Tyr18 lines the tRNA pocket. Catalysis depends on His23, which acts as the Proton acceptor. TRNA is bound by residues Tyr69, Asn71, and Asn117.

This sequence belongs to the PTH family. As to quaternary structure, monomer.

It is found in the cytoplasm. The catalysed reaction is an N-acyl-L-alpha-aminoacyl-tRNA + H2O = an N-acyl-L-amino acid + a tRNA + H(+). Hydrolyzes ribosome-free peptidyl-tRNAs (with 1 or more amino acids incorporated), which drop off the ribosome during protein synthesis, or as a result of ribosome stalling. In terms of biological role, catalyzes the release of premature peptidyl moieties from peptidyl-tRNA molecules trapped in stalled 50S ribosomal subunits, and thus maintains levels of free tRNAs and 50S ribosomes. This Rhodococcus erythropolis (strain PR4 / NBRC 100887) protein is Peptidyl-tRNA hydrolase.